The following is a 75-amino-acid chain: RNA-binding protein KhpA (75 aa).

The KH domain occupies 29–75 (KVVYHLTVHPDDVGKVIGKNGRIAKAIRTVVYASKTDGNKRIYLDIM).

Belongs to the KhpA RNA-binding protein family. In terms of assembly, forms a complex with KhpB.

Its subcellular location is the cytoplasm. A probable RNA chaperone. Forms a complex with KhpB which binds to cellular RNA and controls its expression. Plays a role in peptidoglycan (PG) homeostasis and cell length regulation. The protein is RNA-binding protein KhpA of Oceanobacillus iheyensis (strain DSM 14371 / CIP 107618 / JCM 11309 / KCTC 3954 / HTE831).